The primary structure comprises 300 residues: Type II restriction enzyme HindIII (300 aa).

It carries out the reaction Endonucleolytic cleavage of DNA to give specific double-stranded fragments with terminal 5'-phosphates.. A P subtype restriction enzyme that recognizes the double-stranded sequence 5'-AAGCTT-3' and cleaves after A-1. This Haemophilus influenzae (strain ATCC 51907 / DSM 11121 / KW20 / Rd) protein is Type II restriction enzyme HindIII.